The following is a 58-amino-acid chain: COP9 signalosome complex subunit 6b (58 aa).

This sequence belongs to the peptidase M67A family. CSN6 subfamily. As to quaternary structure, component of the CSN complex, probably composed of CSN1, CSN2, CSN3, CSN4, CSN5 (CSN5A or CSN5B), CSN6 (CSN6A or CSN6B), CSN7 and CSN8.

Its subcellular location is the cytoplasm. It localises to the nucleus. In terms of biological role, component of the COP9 signalosome complex (CSN), a complex involved in various cellular and developmental processes such as photomorphogenesis and auxin and jasmonate responses. The CSN complex is an essential regulator of the ubiquitin (Ubl) conjugation pathway by mediating the deneddylation of the cullin subunits of SCF-type E3 ligase complexes, leading to decrease the Ubl ligase activity of SCF. It is involved in repression of photomorphogenesis in darkness by regulating the activity of COP1-containing Ubl ligase complexes. This is COP9 signalosome complex subunit 6b (CSN6B) from Brassica oleracea (Wild cabbage).